A 182-amino-acid chain; its full sequence is Peptidoglycan L,D-endopeptidase MepK (182 aa).

The segment at residues 1-30 (MDKFDANRRKLLALGGVALGAAILPTPAFA) is a signal peptide (tat-type signal). Positions 133, 140, and 173 each coordinate Zn(2+).

It belongs to the peptidase M15 family. Requires Zn(2+) as cofactor. In terms of processing, predicted to be exported by the Tat system. The position of the signal peptide cleavage has not been experimentally proven.

It functions in the pathway cell wall biogenesis; cell wall polysaccharide biosynthesis. In terms of biological role, l,D-endopeptidase that cleaves meso-diaminopimelic acid (mDAP)-mDAP cross-links in peptidoglycan. It works in conjunction with other elongation-specific D,D-endopeptidases to make space for efficient incorporation of nascent peptidoglycan strands into the sacculus and thus enable cell wall expansion. This chain is Peptidoglycan L,D-endopeptidase MepK, found in Escherichia coli O157:H7.